The primary structure comprises 726 residues: MIVLDRMKISFMLEDSNDNNNNNNNNNNSNNNNNNNNNNGYCDDSSATSSPTGQDSTIDRPNSPSSSIKFTYPSKNSIVTSPSSLQLPSPSFSSSSSSSSSSSSSSLSNKDLMEDGVILLSKIASPSKSSENSPTIHTSSLSPNSYHPYQKYQKPKLHVDHYVSNNNNNNNNNNNNNKKSDYSSELYNTSPSISSKTTPNGSSTNNSPFLSPRQPLFDHSNNNNNNNNDRNENNTTKQQQQLNQLNQLNNNLNSVNNSLFDYNGNSQELQQLIPSSPTRSPSGGSGSESEENDGESSPNNMRSLACNKHSKWKKKCPESCTGRLSPVEIPIATRKLWSQEECCRLLEMVFQRDPQSVTSKESELRWRSIASTLGRTVTSTRKKYMRLMNKWSPRPHCVHPISKLIDQNEKLLLLQTSTEAQQQVQQQQINLQQFYQASQQMTQNLPPQQQQYHQQQMNQQQQLSQQLSQQLTQYKQFQQQQQQNNQQFQQHLQLQQQQLAAQAQVQHQQAQQNLQKQIQQQQKQKPQNGNTQQNNKLKNQNQNQNQNQNQNQNQNQNQNQNYNQNHNQNQNQNYNQQGSNQYLSSISSYSNNNNNNNNNNNSSNNNNNYYNNNNNNNNNNNSNNNSYYNNNNGNNNNGNNYNNNYRSSLSPPHSPHESDRQSPQQKSNNENQQNFPKFRKPIGRPAQSCEAHRNEHQKCPPLCPNRPENLNNNNNNNNNNYNNYHN.

Disordered stretches follow at residues 15–109 (DSND…SLSN), 124–149 (ASPSKSSENSPTIHTSSLSPNSYHPY), 161–239 (HYVS…TKQQ), and 272–303 (LIPSSPTRSPSGGSGSESEENDGESSPNNMRS). Residues 18–39 (DNNNNNNNNNNSNNNNNNNNNN) show a composition bias toward low complexity. Residues 45-80 (SSATSSPTGQDSTIDRPNSPSSSIKFTYPSKNSIVT) show a composition bias toward polar residues. Low complexity predominate over residues 81–108 (SPSSLQLPSPSFSSSSSSSSSSSSSSLS). Positions 124–147 (ASPSKSSENSPTIHTSSLSPNSYH) are enriched in polar residues. A compositionally biased stretch (low complexity) spans 165 to 177 (NNNNNNNNNNNNN). Over residues 183 to 209 (SSELYNTSPSISSKTTPNGSSTNNSPF) the composition is skewed to polar residues. A compositionally biased stretch (low complexity) spans 221 to 239 (NNNNNNNNDRNENNTTKQQ). The Myb-like domain occupies 329–388 (IPIATRKLWSQEECCRLLEMVFQRDPQSVTSKESELRWRSIASTLGRTVTSTRKKYMRLM). Residues 516-651 (KQIQQQQKQK…NNNYRSSLSP (136 aa)) show a composition bias toward low complexity. The segment at 516 to 726 (KQIQQQQKQK…NNNNYNNYHN (211 aa)) is disordered. Positions 661-675 (QSPQQKSNNENQQNF) are enriched in polar residues. Over residues 709-726 (NLNNNNNNNNNNYNNYHN) the composition is skewed to low complexity.

The polypeptide is Myb-like protein Z (mybZ) (Dictyostelium discoideum (Social amoeba)).